The primary structure comprises 114 residues: Hydrogenase maturation factor HypA (114 aa).

Residue histidine 2 participates in Ni(2+) binding. Positions 73, 76, 90, and 93 each coordinate Zn(2+).

The protein belongs to the HypA/HybF family.

In terms of biological role, involved in the maturation of [NiFe] hydrogenases. Required for nickel insertion into the metal center of the hydrogenase. The sequence is that of Hydrogenase maturation factor HypA from Klebsiella pneumoniae subsp. pneumoniae (strain ATCC 700721 / MGH 78578).